We begin with the raw amino-acid sequence, 251 residues long: 5'-nucleotidase SurE (251 aa).

A divalent metal cation-binding residues include aspartate 8, aspartate 9, serine 39, and asparagine 95.

Belongs to the SurE nucleotidase family. Requires a divalent metal cation as cofactor.

Its subcellular location is the cytoplasm. The catalysed reaction is a ribonucleoside 5'-phosphate + H2O = a ribonucleoside + phosphate. Nucleotidase that shows phosphatase activity on nucleoside 5'-monophosphates. The protein is 5'-nucleotidase SurE of Ralstonia pickettii (strain 12J).